The chain runs to 1802 residues: Transposon Ty4-H Gag-Pol polyprotein (1802 aa).

Residues 39 to 115 adopt a coiled-coil conformation; the sequence is RKVSIKDEQV…IQLLETNENN (77 aa). The ty4 protease stretch occupies residues 381-501; that stretch reads NNNLSPVQNE…KTKMVLSRKY (121 aa). Residue D414 is the For protease activity; shared with dimeric partner of the active site. Positions 539 to 599 are integrase-type zinc finger-like; it reads AIKPTSSPGF…EPNEFWCQTC (61 aa). The Integrase catalytic domain occupies 619-786; that stretch reads TDHEPGSSWC…LPLKAISRQP (168 aa). The Mg(2+) site is built by D630 and D695. The tract at residues 1223–1248 is disordered; sequence KRKRKRHDKNNSLTSYELERDKKRSK. The 136-residue stretch at 1375–1510 folds into the Reverse transcriptase Ty1/copia-type domain; sequence RNMFMKTLDI…DILGMDLVYN (136 aa). Mg(2+) contacts are provided by D1383, D1462, D1463, D1644, E1686, and D1720. The 147-residue stretch at 1644–1790 folds into the RNase H Ty1/copia-type domain; it reads DASVGSEYDA…KRFIQVLKNK (147 aa).

In terms of assembly, the protease is a homodimer, whose active site consists of two apposed aspartic acid residues. In terms of processing, proteolytically processed into capsid protein (CA), Ty4 protease (PR), integrase (IN) and reverse transcriptase/ribonuclease H (RT) proteins. Initially, virus-like particles (VLPs) are composed of the structural unprocessed proteins Gag and Gag-Pol, and also contain the host initiator methionine tRNA (tRNA(i)-Met) which serves as a primer for minus-strand DNA synthesis, and a dimer of genomic Ty RNA. Processing of the polyproteins occurs within the particle and proceeds by an ordered pathway, called maturation. First, the protease (PR) is released by autocatalytic cleavage of the Gag-Pol polyprotein, and this cleavage is a prerequisite for subsequent processing at the remaining sites to release the mature structural and catalytic proteins. Maturation takes place prior to the RT reaction and is required to produce transposition-competent VLPs.

The protein localises to the cytoplasm. Its subcellular location is the nucleus. The catalysed reaction is DNA(n) + a 2'-deoxyribonucleoside 5'-triphosphate = DNA(n+1) + diphosphate. It carries out the reaction Endonucleolytic cleavage to 5'-phosphomonoester.. Its function is as follows. Capsid protein (CA) is the structural component of the virus-like particle (VLP), forming the shell that encapsulates the retrotransposons dimeric RNA genome. In terms of biological role, the aspartyl protease (PR) mediates the proteolytic cleavages of the Gag and Gag-Pol polyproteins after assembly of the VLP. Reverse transcriptase/ribonuclease H (RT) is a multifunctional enzyme that catalyzes the conversion of the retro-elements RNA genome into dsDNA within the VLP. The enzyme displays a DNA polymerase activity that can copy either DNA or RNA templates, and a ribonuclease H (RNase H) activity that cleaves the RNA strand of RNA-DNA heteroduplexes during plus-strand synthesis and hydrolyzes RNA primers. The conversion leads to a linear dsDNA copy of the retrotransposon that includes long terminal repeats (LTRs) at both ends. Functionally, integrase (IN) targets the VLP to the nucleus, where a subparticle preintegration complex (PIC) containing at least integrase and the newly synthesized dsDNA copy of the retrotransposon must transit the nuclear membrane. Once in the nucleus, integrase performs the integration of the dsDNA into the host genome. The protein is Transposon Ty4-H Gag-Pol polyprotein (TY4B-H) of Saccharomyces cerevisiae (strain ATCC 204508 / S288c) (Baker's yeast).